The sequence spans 192 residues: Orotate phosphoribosyltransferase 2 (192 aa).

A 5-phospho-alpha-D-ribose 1-diphosphate-binding site is contributed by 116 to 124 (EDIVTTGLS). Orotate-binding residues include Thr-120 and Arg-148.

It belongs to the purine/pyrimidine phosphoribosyltransferase family. PyrE subfamily. In terms of assembly, homodimer. Mg(2+) is required as a cofactor.

It catalyses the reaction orotidine 5'-phosphate + diphosphate = orotate + 5-phospho-alpha-D-ribose 1-diphosphate. The protein operates within pyrimidine metabolism; UMP biosynthesis via de novo pathway; UMP from orotate: step 1/2. Its function is as follows. Catalyzes the transfer of a ribosyl phosphate group from 5-phosphoribose 1-diphosphate to orotate, leading to the formation of orotidine monophosphate (OMP). This chain is Orotate phosphoribosyltransferase 2, found in Mesorhizobium japonicum (strain LMG 29417 / CECT 9101 / MAFF 303099) (Mesorhizobium loti (strain MAFF 303099)).